The sequence spans 222 residues: Deoxyribose-phosphate aldolase (222 aa).

D93 (proton donor/acceptor) is an active-site residue. Residue K156 is the Schiff-base intermediate with acetaldehyde of the active site. K186 serves as the catalytic Proton donor/acceptor.

This sequence belongs to the DeoC/FbaB aldolase family. DeoC type 1 subfamily.

It localises to the cytoplasm. It carries out the reaction 2-deoxy-D-ribose 5-phosphate = D-glyceraldehyde 3-phosphate + acetaldehyde. It participates in carbohydrate degradation; 2-deoxy-D-ribose 1-phosphate degradation; D-glyceraldehyde 3-phosphate and acetaldehyde from 2-deoxy-alpha-D-ribose 1-phosphate: step 2/2. In terms of biological role, catalyzes a reversible aldol reaction between acetaldehyde and D-glyceraldehyde 3-phosphate to generate 2-deoxy-D-ribose 5-phosphate. The chain is Deoxyribose-phosphate aldolase from Nocardia farcinica (strain IFM 10152).